Reading from the N-terminus, the 260-residue chain is Taurine import ATP-binding protein TauB (260 aa).

In terms of domain architecture, ABC transporter spans 6 to 235 (AQQVSVVYAS…RYAHGEPVRS (230 aa)). 40 to 47 (GASGCGKS) lines the ATP pocket.

It belongs to the ABC transporter superfamily. Taurine importer (TC 3.A.1.17.1) family. The complex is composed of two ATP-binding proteins (TauB), two transmembrane proteins (TauC) and a solute-binding protein (TauA).

The protein resides in the cell inner membrane. It catalyses the reaction taurine(out) + ATP + H2O = taurine(in) + ADP + phosphate + H(+). Functionally, part of the ABC transporter complex TauABC involved in taurine import. Responsible for energy coupling to the transport system. The sequence is that of Taurine import ATP-binding protein TauB from Burkholderia pseudomallei (strain K96243).